We begin with the raw amino-acid sequence, 801 residues long: Cation/H(+) antiporter 7 (801 aa).

The next 13 helical transmembrane spans lie at 58 to 78 (PNLELIILSVFFFWQFFEILF), 83 to 103 (IPIPKMPSMMLGCVVINLFSY), 128 to 148 (GAFGFVMYWFLKGVSIDVGML), 154 to 174 (RAALIGFNTLVIPYISGYILM), 192 to 212 (EIILLQSLSSFAGVNGLLTDL), 223 to 243 (VQSCAAVTDLVIFIMVSGTVL), 254 to 274 (IVIVLVIGFLVYIVWPVMLWI), 287 to 307 (VYIYLVMATAYFVYMFWLNFF), 312 to 332 (YGWFIIGLATPAGPPLGSALI), 340 to 360 (VGVLLPLFGSLSMEQLDISWL), 377 to 397 (AISVILIVTVVKFVVTAITAF), 407 to 427 (IVLAMVLSNRSIFELGYLGYI), and 438 to 458 (FTIAALSVLVSSLLTPIAIEF).

Belongs to the monovalent cation:proton antiporter 2 (CPA2) transporter (TC 2.A.37) family. CHX (TC 2.A.37.4) subfamily. In terms of tissue distribution, expressed in pollen.

It localises to the membrane. May operate as a cation/H(+) antiporter. This Arabidopsis thaliana (Mouse-ear cress) protein is Cation/H(+) antiporter 7 (CHX7).